The primary structure comprises 165 residues: Hemolysin, heat labile (165 aa).

An intrachain disulfide couples C151 to C161.

Belongs to the TDH hemolysin family. In terms of assembly, homodimer.

In terms of biological role, bacterial hemolysins are exotoxins that attack blood cell membranes and cause cell rupture by mechanisms not clearly defined. The chain is Hemolysin, heat labile from Grimontia hollisae (Vibrio hollisae).